The chain runs to 72 residues: Translation initiation factor IF-1 1 (72 aa).

An S1-like domain is found at 1–72 (MAKDDVIQMQ…SRARIVFRAK (72 aa)).

The protein belongs to the IF-1 family. In terms of assembly, component of the 30S ribosomal translation pre-initiation complex which assembles on the 30S ribosome in the order IF-2 and IF-3, IF-1 and N-formylmethionyl-tRNA(fMet); mRNA recruitment can occur at any time during PIC assembly.

It localises to the cytoplasm. In terms of biological role, one of the essential components for the initiation of protein synthesis. Stabilizes the binding of IF-2 and IF-3 on the 30S subunit to which N-formylmethionyl-tRNA(fMet) subsequently binds. Helps modulate mRNA selection, yielding the 30S pre-initiation complex (PIC). Upon addition of the 50S ribosomal subunit IF-1, IF-2 and IF-3 are released leaving the mature 70S translation initiation complex. This Ralstonia nicotianae (strain ATCC BAA-1114 / GMI1000) (Ralstonia solanacearum) protein is Translation initiation factor IF-1 1.